The following is a 349-amino-acid chain: Isopentenyl-diphosphate delta-isomerase (349 aa).

Arg6–Lys7 contributes to the substrate binding site. FMN contacts are provided by residues Ala62–Thr64, Ser93, and Asn122. Gln152 contributes to the substrate binding site. A Mg(2+)-binding site is contributed by Glu153. FMN-binding positions include Lys184, Thr214, Gly258–Gly259, and Ala280–Gly281.

The protein belongs to the IPP isomerase type 2 family. In terms of assembly, homooctamer. Dimer of tetramers. It depends on FMN as a cofactor. The cofactor is NADPH. Mg(2+) serves as cofactor.

The protein localises to the cytoplasm. The catalysed reaction is isopentenyl diphosphate = dimethylallyl diphosphate. Functionally, involved in the biosynthesis of isoprenoids. Catalyzes the 1,3-allylic rearrangement of the homoallylic substrate isopentenyl (IPP) to its allylic isomer, dimethylallyl diphosphate (DMAPP). The chain is Isopentenyl-diphosphate delta-isomerase from Bacillus cereus (strain B4264).